The following is a 365-amino-acid chain: UDP-N-acetylglucosamine--N-acetylmuramyl-(pentapeptide) pyrophosphoryl-undecaprenol N-acetylglucosamine transferase (365 aa).

UDP-N-acetyl-alpha-D-glucosamine-binding positions include 19–21 (TGG), N131, R170, S201, I255, 274–279 (ALTVTE), and Q300.

This sequence belongs to the glycosyltransferase 28 family. MurG subfamily.

It localises to the cell inner membrane. It carries out the reaction di-trans,octa-cis-undecaprenyl diphospho-N-acetyl-alpha-D-muramoyl-L-alanyl-D-glutamyl-meso-2,6-diaminopimeloyl-D-alanyl-D-alanine + UDP-N-acetyl-alpha-D-glucosamine = di-trans,octa-cis-undecaprenyl diphospho-[N-acetyl-alpha-D-glucosaminyl-(1-&gt;4)]-N-acetyl-alpha-D-muramoyl-L-alanyl-D-glutamyl-meso-2,6-diaminopimeloyl-D-alanyl-D-alanine + UDP + H(+). The protein operates within cell wall biogenesis; peptidoglycan biosynthesis. Functionally, cell wall formation. Catalyzes the transfer of a GlcNAc subunit on undecaprenyl-pyrophosphoryl-MurNAc-pentapeptide (lipid intermediate I) to form undecaprenyl-pyrophosphoryl-MurNAc-(pentapeptide)GlcNAc (lipid intermediate II). The chain is UDP-N-acetylglucosamine--N-acetylmuramyl-(pentapeptide) pyrophosphoryl-undecaprenol N-acetylglucosamine transferase from Acinetobacter baumannii (strain ACICU).